The sequence spans 354 residues: S-adenosylmethionine:tRNA ribosyltransferase-isomerase (354 aa).

The protein belongs to the QueA family. As to quaternary structure, monomer.

The protein resides in the cytoplasm. The enzyme catalyses 7-aminomethyl-7-carbaguanosine(34) in tRNA + S-adenosyl-L-methionine = epoxyqueuosine(34) in tRNA + adenine + L-methionine + 2 H(+). It participates in tRNA modification; tRNA-queuosine biosynthesis. In terms of biological role, transfers and isomerizes the ribose moiety from AdoMet to the 7-aminomethyl group of 7-deazaguanine (preQ1-tRNA) to give epoxyqueuosine (oQ-tRNA). This chain is S-adenosylmethionine:tRNA ribosyltransferase-isomerase, found in Pseudomonas savastanoi pv. phaseolicola (strain 1448A / Race 6) (Pseudomonas syringae pv. phaseolicola (strain 1448A / Race 6)).